The following is a 129-amino-acid chain: Small ribosomal subunit protein uS8 (129 aa).

The protein belongs to the universal ribosomal protein uS8 family. Part of the 30S ribosomal subunit. Contacts proteins S5 and S12.

In terms of biological role, one of the primary rRNA binding proteins, it binds directly to 16S rRNA central domain where it helps coordinate assembly of the platform of the 30S subunit. The sequence is that of Small ribosomal subunit protein uS8 from Mesoplasma florum (strain ATCC 33453 / NBRC 100688 / NCTC 11704 / L1) (Acholeplasma florum).